The sequence spans 250 residues: MYKLVLVRHGESEWNKENLFTGWTDVKLSEKGVSEACEGGRILKEEGYSFDIAFSSMLVRANDTLNIILCELGQSYIDVEKSWRLNERHYGALQGLNKAETAEKYGEDKVLIWRRSYNVPPMPLDESDKRHPIHDSRYKNIPKSELPSTECLKDTVARVIPYWTDKIAKAILEGKRVIVAAHGNSLRALVKYLDNMSEEDILKLNIPTGIPLVYELDKNLKPVKHYYLGDEDKIKAAMESVANQGKKIDR.

Residues 8 to 15, 21 to 22, Arg-60, 87 to 90, Lys-98, 114 to 115, and 183 to 184 contribute to the substrate site; these read RHGESEWN, TG, ERHY, RR, and GN. His-9 acts as the Tele-phosphohistidine intermediate in catalysis. The active-site Proton donor/acceptor is the Glu-87.

Belongs to the phosphoglycerate mutase family. BPG-dependent PGAM subfamily.

The enzyme catalyses (2R)-2-phosphoglycerate = (2R)-3-phosphoglycerate. The protein operates within carbohydrate degradation; glycolysis; pyruvate from D-glyceraldehyde 3-phosphate: step 3/5. In terms of biological role, catalyzes the interconversion of 2-phosphoglycerate and 3-phosphoglycerate. In Borrelia duttonii (strain Ly), this protein is 2,3-bisphosphoglycerate-dependent phosphoglycerate mutase.